We begin with the raw amino-acid sequence, 237 residues long: Sugar fermentation stimulation protein homolog (237 aa).

Belongs to the SfsA family.

The chain is Sugar fermentation stimulation protein homolog from Colwellia psychrerythraea (strain 34H / ATCC BAA-681) (Vibrio psychroerythus).